The chain runs to 113 residues: uncharacterized protein (113 aa).

A disordered region spans residues 28 to 55; it reads CDGGPRRPLSRRGEEARRARAPSYEEQE.

This is an uncharacterized protein from Human cytomegalovirus (strain AD169) (HHV-5).